The primary structure comprises 396 residues: 1-deoxy-D-xylulose 5-phosphate reductoisomerase (396 aa).

NADPH contacts are provided by threonine 17, glycine 18, serine 19, isoleucine 20, asparagine 47, and asparagine 130. Lysine 131 provides a ligand contact to 1-deoxy-D-xylulose 5-phosphate. Glutamate 132 is a binding site for NADPH. Aspartate 156 is a Mn(2+) binding site. The 1-deoxy-D-xylulose 5-phosphate site is built by serine 157, glutamate 158, serine 182, and histidine 205. Residue glutamate 158 participates in Mn(2+) binding. Position 211 (glycine 211) interacts with NADPH. Positions 218, 223, 224, and 227 each coordinate 1-deoxy-D-xylulose 5-phosphate. Glutamate 227 serves as a coordination point for Mn(2+).

This sequence belongs to the DXR family. It depends on Mg(2+) as a cofactor. Requires Mn(2+) as cofactor.

It carries out the reaction 2-C-methyl-D-erythritol 4-phosphate + NADP(+) = 1-deoxy-D-xylulose 5-phosphate + NADPH + H(+). It functions in the pathway isoprenoid biosynthesis; isopentenyl diphosphate biosynthesis via DXP pathway; isopentenyl diphosphate from 1-deoxy-D-xylulose 5-phosphate: step 1/6. Catalyzes the NADPH-dependent rearrangement and reduction of 1-deoxy-D-xylulose-5-phosphate (DXP) to 2-C-methyl-D-erythritol 4-phosphate (MEP). The sequence is that of 1-deoxy-D-xylulose 5-phosphate reductoisomerase from Rhizobium etli (strain CIAT 652).